The primary structure comprises 557 residues: 2-succinyl-5-enolpyruvyl-6-hydroxy-3-cyclohexene-1-carboxylate synthase (557 aa).

It belongs to the TPP enzyme family. MenD subfamily. Homodimer. Mg(2+) is required as a cofactor. Requires Mn(2+) as cofactor. The cofactor is thiamine diphosphate.

The catalysed reaction is isochorismate + 2-oxoglutarate + H(+) = 5-enolpyruvoyl-6-hydroxy-2-succinyl-cyclohex-3-ene-1-carboxylate + CO2. Its pathway is quinol/quinone metabolism; 1,4-dihydroxy-2-naphthoate biosynthesis; 1,4-dihydroxy-2-naphthoate from chorismate: step 2/7. The protein operates within quinol/quinone metabolism; menaquinone biosynthesis. In terms of biological role, catalyzes the thiamine diphosphate-dependent decarboxylation of 2-oxoglutarate and the subsequent addition of the resulting succinic semialdehyde-thiamine pyrophosphate anion to isochorismate to yield 2-succinyl-5-enolpyruvyl-6-hydroxy-3-cyclohexene-1-carboxylate (SEPHCHC). This chain is 2-succinyl-5-enolpyruvyl-6-hydroxy-3-cyclohexene-1-carboxylate synthase, found in Staphylococcus aureus (strain USA300).